We begin with the raw amino-acid sequence, 335 residues long: Anthranilate phosphoribosyltransferase (335 aa).

5-phospho-alpha-D-ribose 1-diphosphate-binding positions include Gly-82, Gly-85–Asp-86, Thr-90, Asn-92–Thr-95, Lys-110–Ser-118, and Ser-122. Gly-82 contributes to the anthranilate binding site. Position 94 (Ser-94) interacts with Mg(2+). Residue Arg-168 coordinates anthranilate. Mg(2+) contacts are provided by Asp-226 and Glu-227.

This sequence belongs to the anthranilate phosphoribosyltransferase family. As to quaternary structure, homodimer. The cofactor is Mg(2+).

The enzyme catalyses N-(5-phospho-beta-D-ribosyl)anthranilate + diphosphate = 5-phospho-alpha-D-ribose 1-diphosphate + anthranilate. The protein operates within amino-acid biosynthesis; L-tryptophan biosynthesis; L-tryptophan from chorismate: step 2/5. Its function is as follows. Catalyzes the transfer of the phosphoribosyl group of 5-phosphorylribose-1-pyrophosphate (PRPP) to anthranilate to yield N-(5'-phosphoribosyl)-anthranilate (PRA). The chain is Anthranilate phosphoribosyltransferase from Francisella philomiragia subsp. philomiragia (strain ATCC 25017 / CCUG 19701 / FSC 153 / O#319-036).